A 465-amino-acid polypeptide reads, in one-letter code: D-arabinitol 4-dehydrogenase (465 aa).

It belongs to the mannitol dehydrogenase family.

The enzyme catalyses D-arabinitol + NAD(+) = D-xylulose + NADH + H(+). It functions in the pathway carbohydrate metabolism; D-arabinitol metabolism. The sequence is that of D-arabinitol 4-dehydrogenase (dalD) from Ralstonia nicotianae (strain ATCC BAA-1114 / GMI1000) (Ralstonia solanacearum).